A 681-amino-acid chain; its full sequence is Transketolase 2 (681 aa).

Substrate is bound at residue H30. Thiamine diphosphate is bound by residues H69 and 116-118 (GPL). A Mg(2+)-binding site is contributed by D157. G158 and N187 together coordinate thiamine diphosphate. N187 and I189 together coordinate Mg(2+). Residues H263, R359, and S386 each contribute to the substrate site. H263 contributes to the thiamine diphosphate binding site. The thiamine diphosphate site is built by E418 and F445. E418 (proton donor) is an active-site residue. Substrate-binding residues include H469, D477, and R528.

It belongs to the transketolase family. Homodimer. Mg(2+) serves as cofactor. The cofactor is Ca(2+). Mn(2+) is required as a cofactor. It depends on Co(2+) as a cofactor. Requires thiamine diphosphate as cofactor.

It catalyses the reaction D-sedoheptulose 7-phosphate + D-glyceraldehyde 3-phosphate = aldehydo-D-ribose 5-phosphate + D-xylulose 5-phosphate. Its function is as follows. Catalyzes the transfer of a two-carbon ketol group from a ketose donor to an aldose acceptor, via a covalent intermediate with the cofactor thiamine pyrophosphate. This Saccharomyces cerevisiae (strain ATCC 204508 / S288c) (Baker's yeast) protein is Transketolase 2 (TKL2).